A 176-amino-acid chain; its full sequence is Mitochondrial inner membrane protein Mpv17 (176 aa).

Transmembrane regions (helical) follow at residues 18–38 (VQVL…QQLV), 53–73 (TMVS…YKVL), 94–114 (GGFA…LNGL), and 131–151 (LITN…LVPL).

It belongs to the peroxisomal membrane protein PXMP2/4 family. Ubiquitous. Expressed in pancreas, kidney, muscle, liver, lung, placenta, brain and heart.

It localises to the mitochondrion inner membrane. Functionally, non-selective channel that modulates the membrane potential under normal conditions and oxidative stress, and is involved in mitochondrial homeostasis. Involved in mitochondrial deoxynucleoside triphosphates (dNTP) pool homeostasis and mitochondrial DNA (mtDNA) maintenance. May be involved in the regulation of reactive oxygen species metabolism and the control of oxidative phosphorylation. This is Mitochondrial inner membrane protein Mpv17 from Homo sapiens (Human).